Reading from the N-terminus, the 73-residue chain is Conotoxin Cl9.2 (73 aa).

The first 18 residues, 1–18, serve as a signal peptide directing secretion; the sequence is MSKLVILAVLVLLPLVTA. Residues 19–41 constitute a propeptide that is removed on maturation; sequence EHGRDEQAMQPEKKTMWTLWSLT. 3 disulfides stabilise this stretch: C46–C61, C52–C63, and C58–C72.

Expressed by the venom duct.

Its subcellular location is the secreted. The chain is Conotoxin Cl9.2 from Californiconus californicus (California cone).